The chain runs to 84 residues: Small ribosomal subunit protein bS16c (84 aa).

Belongs to the bacterial ribosomal protein bS16 family.

Its subcellular location is the plastid. It localises to the chloroplast. This Mesostigma viride (Green alga) protein is Small ribosomal subunit protein bS16c.